The primary structure comprises 571 residues: Putative fatty-acid--CoA ligase fadD11 (571 aa).

Residues 1 to 19 (MARLRGAGAAGRCRPGRFG) show a composition bias toward low complexity. 2 disordered regions span residues 1 to 35 (MARLRGAGAAGRCRPGRFGSSARRHGLADDGEPDR) and 67 to 91 (RQRGDQGGHLRATVRRSRSRQRCAH). The segment covering 78–91 (ATVRRSRSRQRCAH) has biased composition (basic residues). The next 2 membrane-spanning stretches (helical) occupy residues 314 to 334 (TLAFFAGIGIPIAEIWGMSEL) and 431 to 451 (ANIENTILAACPMVGVMMAIG).

This sequence belongs to the ATP-dependent AMP-binding enzyme family.

Its subcellular location is the cell membrane. This is Putative fatty-acid--CoA ligase fadD11 (fadD11) from Mycobacterium tuberculosis (strain CDC 1551 / Oshkosh).